The following is a 150-amino-acid chain: UPF0756 membrane protein NT05HA_0561 (150 aa).

The next 4 helical transmembrane spans lie at 1-21 (MSLQFNMIALLLVILILLGIF), 52-72 (YGLSIGIVILTIGVLSPLVSG), 81-101 (AFVSWKMFVAIAVGVFVAWLA), and 128-148 (FLGGIPVGPLIAAGILAVLIG).

Belongs to the UPF0756 family.

It localises to the cell membrane. In Aggregatibacter aphrophilus (strain NJ8700) (Haemophilus aphrophilus), this protein is UPF0756 membrane protein NT05HA_0561.